A 402-amino-acid polypeptide reads, in one-letter code: Imidazolonepropionase (402 aa).

His-66 and His-68 together coordinate Fe(3+). Positions 66 and 68 each coordinate Zn(2+). Residues Arg-75, Tyr-138, and His-171 each contribute to the 4-imidazolone-5-propanoate site. Tyr-138 contacts N-formimidoyl-L-glutamate. His-236 is a Fe(3+) binding site. His-236 provides a ligand contact to Zn(2+). Residue Gln-239 coordinates 4-imidazolone-5-propanoate. Residue Asp-311 coordinates Fe(3+). Asp-311 contacts Zn(2+). Residues Asn-313 and Gly-315 each coordinate N-formimidoyl-L-glutamate. Thr-316 serves as a coordination point for 4-imidazolone-5-propanoate.

Belongs to the metallo-dependent hydrolases superfamily. HutI family. Zn(2+) serves as cofactor. It depends on Fe(3+) as a cofactor.

It is found in the cytoplasm. The catalysed reaction is 4-imidazolone-5-propanoate + H2O = N-formimidoyl-L-glutamate. It functions in the pathway amino-acid degradation; L-histidine degradation into L-glutamate; N-formimidoyl-L-glutamate from L-histidine: step 3/3. Its function is as follows. Catalyzes the hydrolytic cleavage of the carbon-nitrogen bond in imidazolone-5-propanoate to yield N-formimidoyl-L-glutamate. It is the third step in the universal histidine degradation pathway. The protein is Imidazolonepropionase of Pseudomonas aeruginosa (strain UCBPP-PA14).